Consider the following 135-residue polypeptide: Regulator of ribonuclease activity B (135 aa).

A disordered region spans residues 114–135; that stretch reads WGTYFESDEDDEEDESEDKPEA. A compositionally biased stretch (acidic residues) spans 119-135; that stretch reads ESDEDDEEDESEDKPEA.

Belongs to the RraB family. In terms of assembly, interacts with the C-terminal region of Rne.

It localises to the cytoplasm. Functionally, globally modulates RNA abundance by binding to RNase E (Rne) and regulating its endonucleolytic activity. Can modulate Rne action in a substrate-dependent manner by altering the composition of the degradosome. The chain is Regulator of ribonuclease activity B from Photobacterium profundum (strain SS9).